The chain runs to 499 residues: MIRNSMKSHTELLSWSLLQKEAKRVRLNSDSQPRVVPDSNNYESRKQINCIVYDYSRQRVNRTIIDLLIDLANEVKLPEKIDNLINGKKINISENRPALHTALRDLSNKSILIDGLDIMSEVVSTREKIRMISNRIREKKWLGYSGLPITDVVNIGIGGSDLGPRVCIHALSNYVSKEFNYHFISDVDPASFNDVIVKINPETTLFIVSSKSFTTKETLLNARKAFALYEDRASIDQHFIAVTAHPERAHQIGIKTVLPIWDWVGGRFSFCSAVNLITAIAIGYEQFVELLAGAHDVDTHVQFTDFKNNIPVLMALIGIWNNNFLNIHNLLILTYSKKLEYFVPYVQQLDMESNGKSIDVNGRMVGYATGPIVWGGLGNQAQHSYFQLLCQGTHRCVGDFITLKTNDEHEINSMCHYKMKVLSEGIQTIENPYGYIPGNMPMNHLILSDCSPYTLGALVALYEHKIFVQSVIWNINPFDQPGIESAKSAHREITLSSEL.

The active-site Proton donor is the Glu-352. Catalysis depends on residues His-383 and Lys-487.

Belongs to the GPI family.

It is found in the cytoplasm. The catalysed reaction is alpha-D-glucose 6-phosphate = beta-D-fructose 6-phosphate. It functions in the pathway carbohydrate biosynthesis; gluconeogenesis. The protein operates within carbohydrate degradation; glycolysis; D-glyceraldehyde 3-phosphate and glycerone phosphate from D-glucose: step 2/4. Catalyzes the reversible isomerization of glucose-6-phosphate to fructose-6-phosphate. In Legionella pneumophila (strain Lens), this protein is Glucose-6-phosphate isomerase.